A 253-amino-acid chain; its full sequence is Methionine-R-sulfoxide reductase B3, mitochondrial (253 aa).

The first 56 residues, 1-56 (MPPAAPSVARSREGGGIGQRRLVFPKSARRTLPCPIALCLGLCLAAAAATTTRASA), serve as a signal peptide directing secretion. Residue Lys102 is modified to N6-acetyllysine. Residues 107 to 229 (QQELRKRLTP…NSASLSFTPA (123 aa)) enclose the MsrB domain. Positions 146, 149, 195, and 198 each coordinate Zn(2+). Cys218 functions as the Nucleophile in the catalytic mechanism. Residues 227-253 (TPADSSEAEGSGIKESGSPAAADRAEL) form a disordered region. Ser244 is modified (phosphoserine). Residues 250 to 253 (RAEL) carry the Endoplasmic reticulum retention signal motif.

Belongs to the MsrB Met sulfoxide reductase family. In terms of assembly, monomer. Requires Zn(2+) as cofactor. Widely expressed. Detected in the sensory epithelia of the organ of Corti and vestibular end organs as early as P2 up to adulthood (at protein level). In the organ of Corti, present in inner and outer hair cells and, to a lesser extent, in supporting cells (at protein level). In hair cells, distributed throughout the cell body. Barely detectable level in stereocilia. Also observed in spiral ganglion neurons, but not in the stria vascularis. In the vestibular end organs, found throughout the sensory epithelium, but more intense expression in hair cells than in supporting cells (at protein level). In vestibular hair cells, present within cell bodies and to a lesser extent in kinocilia. Barely detectable in stereocilia.

It is found in the endoplasmic reticulum. The catalysed reaction is L-methionyl-[protein] + [thioredoxin]-disulfide + H2O = L-methionyl-(R)-S-oxide-[protein] + [thioredoxin]-dithiol. The enzyme catalyses [thioredoxin]-disulfide + L-methionine + H2O = L-methionine (R)-S-oxide + [thioredoxin]-dithiol. In terms of biological role, catalyzes the reduction of free and protein-bound methionine sulfoxide to methionine. The sequence is that of Methionine-R-sulfoxide reductase B3, mitochondrial (Msrb3) from Mus musculus (Mouse).